The sequence spans 1024 residues: Error-prone DNA polymerase (1024 aa).

The protein belongs to the DNA polymerase type-C family. DnaE2 subfamily.

The protein resides in the cytoplasm. It carries out the reaction DNA(n) + a 2'-deoxyribonucleoside 5'-triphosphate = DNA(n+1) + diphosphate. DNA polymerase involved in damage-induced mutagenesis and translesion synthesis (TLS). It is not the major replicative DNA polymerase. The chain is Error-prone DNA polymerase from Vibrio parahaemolyticus serotype O3:K6 (strain RIMD 2210633).